Here is a 183-residue protein sequence, read N- to C-terminus: ATP synthase subunit b, chloroplastic (183 aa).

Residues 27–49 (LATNLINLTVVVGVLIFFGKGVL) form a helical membrane-spanning segment.

The protein belongs to the ATPase B chain family. In terms of assembly, F-type ATPases have 2 components, F(1) - the catalytic core - and F(0) - the membrane proton channel. F(1) has five subunits: alpha(3), beta(3), gamma(1), delta(1), epsilon(1). F(0) has four main subunits: a(1), b(1), b'(1) and c(10-14). The alpha and beta chains form an alternating ring which encloses part of the gamma chain. F(1) is attached to F(0) by a central stalk formed by the gamma and epsilon chains, while a peripheral stalk is formed by the delta, b and b' chains.

The protein localises to the plastid. It is found in the chloroplast thylakoid membrane. Functionally, f(1)F(0) ATP synthase produces ATP from ADP in the presence of a proton or sodium gradient. F-type ATPases consist of two structural domains, F(1) containing the extramembraneous catalytic core and F(0) containing the membrane proton channel, linked together by a central stalk and a peripheral stalk. During catalysis, ATP synthesis in the catalytic domain of F(1) is coupled via a rotary mechanism of the central stalk subunits to proton translocation. In terms of biological role, component of the F(0) channel, it forms part of the peripheral stalk, linking F(1) to F(0). The chain is ATP synthase subunit b, chloroplastic from Brachypodium distachyon (Purple false brome).